Consider the following 497-residue polypeptide: Di-/tripeptide transporter (497 aa).

12 helical membrane passes run 3–23, 26–46, 57–77, 84–104, 119–139, 155–175, 199–219, 227–247, 294–314, 321–341, 372–392, and 452–472; these read AILLFYMYYAVTKGGLGMSQT, ASIMSIYGSLVYLSTLVGGWL, VFYGGVLIMLGHIVLALPAGV, IALIVVGTGLLKPNVSDMVGG, IFVFGINLGSIIAPWLVPWAA, AGFSLAAVGMFFGLVQYVLGG, IKWVVIIIIAIVAILAAMAGV, VITLLTILAIALPIYYFVMMF, FIILIALIIMASILIPNKVII, LVLLVFYWIGLNLIPFSTFVL, GIEIPLFLRQLIINIFTLIIL, and IVIIIFYLVKMAALWWAWSYI.

The protein belongs to the major facilitator superfamily. Proton-dependent oligopeptide transporter (POT/PTR) (TC 2.A.17) family.

It localises to the cell membrane. Functionally, proton-dependent uptake of di- or tri-peptides. The sequence is that of Di-/tripeptide transporter (dtpT) from Lactobacillus helveticus (Lactobacillus suntoryeus).